Consider the following 102-residue polypeptide: MYAIIETGGKQFRVEEGSKIFVEKLASEAGSEIVIDKVLMLGGGDVKVGAPYVENAKVTAEVVEHGRGEKVVIFKKWRRNDSRKKQGHRQDFTALKIKAITA.

It belongs to the bacterial ribosomal protein bL21 family. As to quaternary structure, part of the 50S ribosomal subunit. Contacts protein L20.

Functionally, this protein binds to 23S rRNA in the presence of protein L20. This chain is Large ribosomal subunit protein bL21, found in Nitratidesulfovibrio vulgaris (strain ATCC 29579 / DSM 644 / CCUG 34227 / NCIMB 8303 / VKM B-1760 / Hildenborough) (Desulfovibrio vulgaris).